Reading from the N-terminus, the 179-residue chain is Large ribosomal subunit protein uL10 (179 aa).

It belongs to the universal ribosomal protein uL10 family. In terms of assembly, part of the ribosomal stalk of the 50S ribosomal subunit. The N-terminus interacts with L11 and the large rRNA to form the base of the stalk. The C-terminus forms an elongated spine to which L12 dimers bind in a sequential fashion forming a multimeric L10(L12)X complex.

Functionally, forms part of the ribosomal stalk, playing a central role in the interaction of the ribosome with GTP-bound translation factors. This is Large ribosomal subunit protein uL10 from Thermomicrobium roseum (strain ATCC 27502 / DSM 5159 / P-2).